A 90-amino-acid polypeptide reads, in one-letter code: Leech factor Xa inhibitor (90 aa).

It localises to the secreted. In terms of biological role, potent anticoagulant inhibiting the amidolytic activity of factor Xa (F10) (Ki=4nM) and reducing its ability to activate prothrombin (F2) in the prothrombinase complex (EC(50)=40nM). The polypeptide is Leech factor Xa inhibitor (Haementeria depressa (Leech)).